Reading from the N-terminus, the 201-residue chain is Large ribosomal subunit protein uL4 (201 aa).

Residues 45-71 (AQKTRAEVTGSGKKPWRQKGTGRARAG) form a disordered region.

It belongs to the universal ribosomal protein uL4 family. Part of the 50S ribosomal subunit.

Functionally, one of the primary rRNA binding proteins, this protein initially binds near the 5'-end of the 23S rRNA. It is important during the early stages of 50S assembly. It makes multiple contacts with different domains of the 23S rRNA in the assembled 50S subunit and ribosome. Its function is as follows. Forms part of the polypeptide exit tunnel. This Shewanella halifaxensis (strain HAW-EB4) protein is Large ribosomal subunit protein uL4.